Reading from the N-terminus, the 347-residue chain is Phosphoribosylformylglycinamidine cyclo-ligase (347 aa).

This sequence belongs to the AIR synthase family.

Its subcellular location is the cytoplasm. The catalysed reaction is 2-formamido-N(1)-(5-O-phospho-beta-D-ribosyl)acetamidine + ATP = 5-amino-1-(5-phospho-beta-D-ribosyl)imidazole + ADP + phosphate + H(+). The protein operates within purine metabolism; IMP biosynthesis via de novo pathway; 5-amino-1-(5-phospho-D-ribosyl)imidazole from N(2)-formyl-N(1)-(5-phospho-D-ribosyl)glycinamide: step 2/2. This is Phosphoribosylformylglycinamidine cyclo-ligase from Prochlorococcus marinus (strain MIT 9301).